The sequence spans 211 residues: Small ribosomal subunit protein uS3 (211 aa).

One can recognise a KH type-2 domain in the interval 38–106 (LRKFIKKAFY…NIELNIIEVK (69 aa)).

The protein belongs to the universal ribosomal protein uS3 family. As to quaternary structure, part of the 30S ribosomal subunit. Forms a tight complex with proteins S10 and S14.

In terms of biological role, binds the lower part of the 30S subunit head. Binds mRNA in the 70S ribosome, positioning it for translation. This Ehrlichia canis (strain Jake) protein is Small ribosomal subunit protein uS3.